Reading from the N-terminus, the 172-residue chain is C-phycocyanin-2 beta subunit (172 aa).

The residue at position 72 (asparagine 72) is an N4-methylasparagine. (2R,3E)-phycocyanobilin is bound by residues cysteine 82 and cysteine 153.

The protein belongs to the phycobiliprotein family. In terms of assembly, heterodimer of an alpha and a beta subunit, which further assembles into trimers and the trimers into hexamers. Post-translationally, contains two covalently linked bilin chromophores.

The protein localises to the cellular thylakoid membrane. Light-harvesting photosynthetic bile pigment-protein from the phycobiliprotein complex (phycobilisome, PBS). Phycocyanin is the major phycobiliprotein in the PBS rod. This Microchaete diplosiphon (Fremyella diplosiphon) protein is C-phycocyanin-2 beta subunit (cpcB2).